Consider the following 60-residue polypeptide: DNA-directed RNA polymerase subunit Rpo6 (60 aa).

The protein belongs to the archaeal Rpo6/eukaryotic RPB6 RNA polymerase subunit family. Part of the RNA polymerase complex.

It is found in the cytoplasm. The enzyme catalyses RNA(n) + a ribonucleoside 5'-triphosphate = RNA(n+1) + diphosphate. In terms of biological role, DNA-dependent RNA polymerase (RNAP) catalyzes the transcription of DNA into RNA using the four ribonucleoside triphosphates as substrates. The polypeptide is DNA-directed RNA polymerase subunit Rpo6 (Methanosarcina acetivorans (strain ATCC 35395 / DSM 2834 / JCM 12185 / C2A)).